A 494-amino-acid chain; its full sequence is Inosine-5'-monophosphate dehydrogenase (494 aa).

2 CBS domains span residues 93–154 and 158–217; these read IIRN…DEKI and MTTN…CKDS. NAD(+) is bound by residues Asp-251 and 301-303; that span reads GIG. Gly-303 and Gly-305 together coordinate K(+). Position 306 (Ser-306) interacts with IMP. Cys-308 serves as a coordination point for K(+). Cys-308 acts as the Thioimidate intermediate in catalysis. Residues 341-343, 364-365, and 388-392 contribute to the IMP site; these read DGG, GS, and YRGMG. Catalysis depends on Arg-406, which acts as the Proton acceptor. Glu-421 is an IMP binding site. Residues Glu-475, Ser-476, and His-477 each coordinate K(+).

This sequence belongs to the IMPDH/GMPR family. Homotetramer. The cofactor is K(+).

The catalysed reaction is IMP + NAD(+) + H2O = XMP + NADH + H(+). It participates in purine metabolism; XMP biosynthesis via de novo pathway; XMP from IMP: step 1/1. Mycophenolic acid (MPA) is a non-competitive inhibitor that prevents formation of the closed enzyme conformation by binding to the same site as the amobile flap. In contrast, mizoribine monophosphate (MZP) is a competitive inhibitor that induces the closed conformation. MPA is a potent inhibitor of mammalian IMPDHs but a poor inhibitor of the bacterial enzymes. MZP is a more potent inhibitor of bacterial IMPDH. Its function is as follows. Catalyzes the conversion of inosine 5'-phosphate (IMP) to xanthosine 5'-phosphate (XMP), the first committed and rate-limiting step in the de novo synthesis of guanine nucleotides, and therefore plays an important role in the regulation of cell growth. The sequence is that of Inosine-5'-monophosphate dehydrogenase from Chlorobaculum tepidum (strain ATCC 49652 / DSM 12025 / NBRC 103806 / TLS) (Chlorobium tepidum).